Consider the following 469-residue polypeptide: 3-isopropylmalate dehydratase large subunit (469 aa).

[4Fe-4S] cluster is bound by residues Cys350, Cys410, and Cys413.

It belongs to the aconitase/IPM isomerase family. LeuC type 1 subfamily. In terms of assembly, heterodimer of LeuC and LeuD. The cofactor is [4Fe-4S] cluster.

It catalyses the reaction (2R,3S)-3-isopropylmalate = (2S)-2-isopropylmalate. Its pathway is amino-acid biosynthesis; L-leucine biosynthesis; L-leucine from 3-methyl-2-oxobutanoate: step 2/4. Its function is as follows. Catalyzes the isomerization between 2-isopropylmalate and 3-isopropylmalate, via the formation of 2-isopropylmaleate. This chain is 3-isopropylmalate dehydratase large subunit, found in Rhizobium leguminosarum bv. trifolii (strain WSM2304).